Reading from the N-terminus, the 76-residue chain is Small ribosomal subunit protein uS17 (76 aa).

This sequence belongs to the universal ribosomal protein uS17 family. As to quaternary structure, part of the 30S ribosomal subunit.

One of the primary rRNA binding proteins, it binds specifically to the 5'-end of 16S ribosomal RNA. In Ruegeria pomeroyi (strain ATCC 700808 / DSM 15171 / DSS-3) (Silicibacter pomeroyi), this protein is Small ribosomal subunit protein uS17.